Consider the following 432-residue polypeptide: Tol-Pal system protein TolB (432 aa).

The first 22 residues, 1 to 22 (MMFKKCLSVLFTCLIFISSARA), serve as a signal peptide directing secretion.

Belongs to the TolB family. As to quaternary structure, the Tol-Pal system is composed of five core proteins: the inner membrane proteins TolA, TolQ and TolR, the periplasmic protein TolB and the outer membrane protein Pal. They form a network linking the inner and outer membranes and the peptidoglycan layer.

It is found in the periplasm. Its function is as follows. Part of the Tol-Pal system, which plays a role in outer membrane invagination during cell division and is important for maintaining outer membrane integrity. The sequence is that of Tol-Pal system protein TolB from Marinomonas sp. (strain MWYL1).